Reading from the N-terminus, the 1189-residue chain is Ras-specific guanine nucleotide-releasing factor 2 (1189 aa).

A PH 1 domain is found at 22-133 (EGTKRGFLSK…WMEAIHQASY (112 aa)). A coiled-coil region spans residues 158-193 (KIATNQLRHQLEDQDTEIERLKSEIVALNKTKERMR). In terms of domain architecture, IQ spans 205–234 (DIKKIKKVQSFMRGWLCRRKWKTIVQDYIC). In terms of domain architecture, DH spans 243–429 (KRNQIVFTMV…EELSRVMHDE (187 aa)). A PH 2 domain is found at 470–588 (PSVERGKLSK…WMSDISQCVD (119 aa)). The N-terminal Ras-GEF domain maps to 635-755 (KVPQIRYASV…LTSSLNSRIG (121 aa)). The disordered stretch occupies residues 713-738 (VDGKSPRLCRKFSSPPPLAVSRTSSP). Ser-725 and Ser-726 each carry phosphoserine. Position 736 is a phosphoserine; by CDK5 (Ser-736). Residues 743–751 (KLSLTSSLN) are regulates proteasomal degradation. Phosphoserine occurs at positions 745 and 749. The tract at residues 757 to 817 (LDLTNSSSSS…TPRHLRYRQP (61 aa)) is disordered. A compositionally biased stretch (low complexity) spans 762-776 (SSSSSSPTTTTHSPA). Residues Ser-801, Ser-805, and Ser-924 each carry the phosphoserine modification. Residues 954–1186 (SAMELAEQIT…YELSLKIEPR (233 aa)) enclose the Ras-GEF domain. Positions 1051–1080 (ALNRSAIYRLKKTWAKVSKQTKALMDKLQK) are responsible of the affinity for farnesylated versus geranylgeranylated Ras.

Homooligomer and heterooligomer with RASGRF1. Interacts with Ras and RAC1. Interacts in a calcium-dependent manner with calmodulin. Interacts with EPB49 and probably CDK5R1. Interacts with the AMPA receptor through GRIA1. Interacts with microtubules. Post-translationally, phosphorylated by CDK5; down-regulates RASGRF2-mediated RAC1 activation. In terms of processing, ubiquitinated upon interaction with Ras. Ubiquitination leads to degradation through the 26S proteasome. As to expression, expressed in brain in the nucleus of the solitary tract. Not observed in the hippocampus (at protein level).

It localises to the cytoplasm. The protein resides in the cell membrane. The protein localises to the endoplasmic reticulum membrane. Functions as a calcium-regulated nucleotide exchange factor activating both Ras and RAC1 through the exchange of bound GDP for GTP. Preferentially activates HRAS in vivo compared to RRAS based on their different types of prenylation. Functions in synaptic plasticity by contributing to the induction of long term potentiation. The protein is Ras-specific guanine nucleotide-releasing factor 2 (Rasgrf2) of Mus musculus (Mouse).